Reading from the N-terminus, the 797-residue chain is Peroxisome proliferator-activated receptor gamma coactivator 1-alpha (797 aa).

At Lys77 the chain carries N6-acetyllysine. Residues 101–138 (EDGLPSFDALTDGAVTTDNEASPSSMPDGTPPPQEAEE) are disordered. The segment covering 114–127 (AVTTDNEASPSSMP) has biased composition (polar residues). Positions 142-146 (LKKLL) match the LXXLL motif motif. At Lys144 the chain carries N6-acetyllysine. Phosphothreonine; by AMPK is present on Thr177. Lys183 carries the N6-acetyllysine modification. Positions 212-276 (YLTTNDDPPH…NDPKGSPFEN (65 aa)) are disordered. The segment covering 218–236 (DPPHTKPTENRNSSRDKCA) has biased composition (basic and acidic residues). Positions 243-259 (TQPQSQHAQAKPTTLSL) are enriched in polar residues. Lys253, Lys270, Lys277, Lys320, Lys346, Lys412, Lys441, and Lys450 each carry N6-acetyllysine. The tract at residues 289–376 (GTAGLTPPTT…HEERKTKRPS (88 aa)) is disordered. Residues 292–338 (GLTPPTTPPHKANQDNPFKASPKLKPSCKTVVPPPTKRARYSECSGT) are interaction with PPARG. The tract at residues 349-797 (EQSELYAQLS…LKEAQRSLRR (449 aa)) is mediates interaction with RNF34. Position 538 is a phosphoserine; by AMPK (Ser538). Disordered regions lie at residues 543–598 (NSPC…SSRS), 612–634 (HRNS…PRYD), and 648–668 (EYRK…ERQK). Over residues 562–577 (QRMRSRSRSFSRHRSC) the composition is skewed to basic residues. Over residues 578 to 598 (SRSPYSRSRSRSPGSRSSSRS) the composition is skewed to low complexity. Basic residues predominate over residues 621 to 630 (SRSRSPYSRR). The RRM domain occupies 676–752 (RVIYVGKIRP…TDFELYFCGR (77 aa)). An N6-acetyllysine mark is found at Lys757 and Lys778.

Homooligomer. Interacts with MYBBP1A; inhibits MYBBP1A transcriptional activation. Interacts with PRDM16, LPIN1 and PML. Interacts (via LXXLL motif) with RORA and RORC (via AF-2 motif); activates RORA and RORC transcriptional activation. Interacts with LRPPRC. Interacts with FOXO1. Interacts with NR5A2. In terms of processing, phosphorylation by AMPK in skeletal muscle increases activation of its own promoter. Phosphorylated by CLK2. Post-translationally, heavily acetylated by KAT2A/GCN5 under conditions of high nutrients, leading to inactivation of PPARGC1A. Deacetylated by SIRT1 in low nutrients/high NAD conditions, leading to its activation. Ubiquitinated. Ubiquitination by RNF34 induces proteasomal degradation. As to expression, white quadriceps and red tibialis anterior (TA) muscles, liver, kidney and brown adipose tissue (at protein level). Skeletal muscle, brown adipose tissue, heart, kidney and brain.

It is found in the nucleus. The protein resides in the PML body. Its function is as follows. Transcriptional coactivator for steroid receptors and nuclear receptors. Greatly increases the transcriptional activity of PPARG and thyroid hormone receptor on the uncoupling protein promoter. Can regulate key mitochondrial genes that contribute to the program of adaptive thermogenesis. Plays an essential role in metabolic reprogramming in response to dietary availability through coordination of the expression of a wide array of genes involved in glucose and fatty acid metabolism. Acts as a key regulator of gluconeogenesis: stimulates hepatic gluconeogenesis by increasing the expression of gluconeogenic enzymes, and acting together with FOXO1 to promote the fasting gluconeogenic program. Induces the expression of PERM1 in the skeletal muscle in an ESRRA-dependent manner. Also involved in the integration of the circadian rhythms and energy metabolism. Required for oscillatory expression of clock genes, such as BMAL1 and NR1D1, through the coactivation of RORA and RORC, and metabolic genes, such as PDK4 and PEPCK. This Mus musculus (Mouse) protein is Peroxisome proliferator-activated receptor gamma coactivator 1-alpha (Ppargc1a).